A 227-amino-acid chain; its full sequence is PKHD-type hydroxylase Mfla_2317 (227 aa).

A Fe2OG dioxygenase domain is found at 78–178; sequence KVFPPLFNRY…RVSSFFWMQS (101 aa). H96, D98, and H159 together coordinate Fe cation. R169 provides a ligand contact to 2-oxoglutarate.

Fe(2+) serves as cofactor. L-ascorbate is required as a cofactor.

This is PKHD-type hydroxylase Mfla_2317 from Methylobacillus flagellatus (strain ATCC 51484 / DSM 6875 / VKM B-1610 / KT).